Reading from the N-terminus, the 474-residue chain is ERO1-like protein alpha (474 aa).

The signal sequence occupies residues 1–29 (MVSGCCRLDMSSYVSVLVLCSLLLWGSNS). 8 disulfide bridges follow: cysteine 40/cysteine 53, cysteine 42/cysteine 51, cysteine 90/cysteine 398, cysteine 99/cysteine 104, cysteine 99/cysteine 138, cysteine 104/cysteine 109, cysteine 215/cysteine 248, and cysteine 401/cysteine 404. FAD is bound by residues arginine 194, threonine 196, and tryptophan 207. Serine 259, histidine 262, arginine 294, and arginine 307 together coordinate FAD. 2 N-linked (GlcNAc...) asparagine glycosylation sites follow: asparagine 340 and asparagine 391. A glycan (N-linked (GlcNAc...) asparagine) is linked at asparagine 430.

Belongs to the EROs family. Predominantly monomer. May function both as a monomer and a homodimer. It depends on FAD as a cofactor. The Cys-99/Cys-104 and Cys-401/Cys-404 disulfide bonds constitute the redox-active center. The Cys-99/Cys-104 disulfide bond may accept electron from protein disulfide isomerase (PDI) and funnel them to the active site disulfide Cys-401/Cys-404.

It localises to the endoplasmic reticulum membrane. Its activity is regulated as follows. Enzyme activity is tightly regulated to prevent the accumulation of reactive oxygen species in the endoplasmic reticulum. Reversibly down-regulated by the formation of disulfide bonds between the active site Cys-99 and Cys-138, and between Cys-104 and Cys-109. Glutathione may be required to regulate its activity in the endoplasmic reticulum. Its function is as follows. Oxidoreductase involved in disulfide bond formation in the endoplasmic reticulum. Efficiently reoxidizes P4HB/PDI, the enzyme catalyzing protein disulfide formation, in order to allow P4HB to sustain additional rounds of disulfide formation. Following P4HB reoxidation, passes its electrons to molecular oxygen via FAD, leading to the production of reactive oxygen species (ROS) in the cell. Required for the folding of immunoglobulins. This is ERO1-like protein alpha from Xenopus tropicalis (Western clawed frog).